Consider the following 116-residue polypeptide: Protein Wnt-5(I) (116 aa).

The O-palmitoleoyl serine; by PORCN moiety is linked to residue Ser-1. The N-linked (GlcNAc...) asparagine glycan is linked to Asn-69. Cys-82 and Cys-97 are oxidised to a cystine.

Belongs to the Wnt family. In terms of processing, palmitoleoylation is required for efficient binding to frizzled receptors. Depalmitoleoylation leads to Wnt signaling pathway inhibition.

Its subcellular location is the secreted. The protein localises to the extracellular space. It localises to the extracellular matrix. Ligand for members of the frizzled family of seven transmembrane receptors. Probable developmental protein. May be a signaling molecule which affects the development of discrete regions of tissues. Is likely to signal over only few cell diameters. The chain is Protein Wnt-5(I) (WNT-5(I)) from Eptatretus stoutii (Pacific hagfish).